The primary structure comprises 311 residues: Probable cell division protein WhiA (311 aa).

The H-T-H motif DNA-binding region spans 277 to 311 (TLKEVADQIPDGPISKSGVNHRFKKLHEIAESLRE).

Belongs to the WhiA family.

Functionally, involved in cell division and chromosome segregation. The chain is Probable cell division protein WhiA from Lactobacillus acidophilus (strain ATCC 700396 / NCK56 / N2 / NCFM).